The primary structure comprises 388 residues: 3-ketoacyl-CoA thiolase (388 aa).

Cys-91 serves as the catalytic Acyl-thioester intermediate. Catalysis depends on proton acceptor residues His-343 and Cys-373.

This sequence belongs to the thiolase-like superfamily. Thiolase family. Heterotetramer of two alpha chains (FadB) and two beta chains (FadA).

It localises to the cytoplasm. It catalyses the reaction an acyl-CoA + acetyl-CoA = a 3-oxoacyl-CoA + CoA. It functions in the pathway lipid metabolism; fatty acid beta-oxidation. In terms of biological role, catalyzes the final step of fatty acid oxidation in which acetyl-CoA is released and the CoA ester of a fatty acid two carbons shorter is formed. This Photorhabdus laumondii subsp. laumondii (strain DSM 15139 / CIP 105565 / TT01) (Photorhabdus luminescens subsp. laumondii) protein is 3-ketoacyl-CoA thiolase.